Consider the following 211-residue polypeptide: Protein-L-isoaspartate O-methyltransferase (211 aa).

The active site involves S60.

This sequence belongs to the methyltransferase superfamily. L-isoaspartyl/D-aspartyl protein methyltransferase family.

The protein localises to the cytoplasm. It carries out the reaction [protein]-L-isoaspartate + S-adenosyl-L-methionine = [protein]-L-isoaspartate alpha-methyl ester + S-adenosyl-L-homocysteine. Its function is as follows. Catalyzes the methyl esterification of L-isoaspartyl residues in peptides and proteins that result from spontaneous decomposition of normal L-aspartyl and L-asparaginyl residues. It plays a role in the repair and/or degradation of damaged proteins. This Pseudomonas aeruginosa (strain LESB58) protein is Protein-L-isoaspartate O-methyltransferase.